Reading from the N-terminus, the 326-residue chain is HTH-type transcriptional regulator BlaA (326 aa).

Residues 1–59 enclose the HTH lysR-type domain; the sequence is MDVVNACRAFVKVSERGSFTVGAAAAQMSQSVASRRVAALEKHFGERLFDRASRRPSLT. A DNA-binding region (H-T-H motif) is located at residues 19-38; it reads FTVGAAAAQMSQSVASRRVA. Positions 289–326 are disordered; it reads TADHGPDPATGAGPGADAGTEPGARAEPGAPEEGAQAC. Low complexity predominate over residues 295-326; that stretch reads DPATGAGPGADAGTEPGARAEPGAPEEGAQAC.

Belongs to the LysR transcriptional regulatory family.

Functionally, positive regulator of the expression of the gene (blaB) for beta-lactamase. It binds to the blaL-blaA intercistronic region. This chain is HTH-type transcriptional regulator BlaA (blaA), found in Streptomyces cacaoi.